The following is a 389-amino-acid chain: Large envelope protein (389 aa).

N-acetylmethionine is present on M1. A lipid anchor (N-myristoyl glycine; by host) is attached at G2. The pre-S1 stretch occupies residues 2 to 108; that stretch reads GQNLSTSNPL…PPLRTTHPQA (107 aa). A pre-S region spans residues 2 to 163; the sequence is GQNLSTSNPL…SSRIGDPALN (162 aa). The Virion surface; in external conformation portion of the chain corresponds to 2 to 170; it reads GQNLSTSNPL…ALNMENITSG (169 aa). Residues 2 to 242 are Intravirion; in internal conformation-facing; the sequence is GQNLSTSNPL…VGYRWMCLRR (241 aa). Disordered stretches follow at residues 76-102 and 133-154; these read TLPANPPPASTNRQSGRQPTPLSPPLR and GGSSSGTVNPVPTTASPTLSTS. Residues 85 to 95 show a composition bias toward polar residues; the sequence is STNRQSGRQPT. Residues 109–163 are pre-S2; it reads MQWNSTTFHQTLQDPRVRGLYLPAGGSSSGTVNPVPTTASPTLSTSSRIGDPALN. A compositionally biased stretch (low complexity) spans 142 to 154; the sequence is PVPTTASPTLSTS. The chain crosses the membrane as a helical span at residues 171–191; that stretch reads FLGPLLVLQAGFFLLTRILTI. Residues 192-242 are Intravirion; in external conformation-facing; the sequence is PQSLDSWWTSLSFLGGTTVCLGQNSQSPTSNHSPTSCPPTCVGYRWMCLRR. The chain crosses the membrane as a helical span at residues 243–263; the sequence is FIIFLFILLLCLIFLLVLLDY. Over 264–337 the chain is Virion surface; that stretch reads QGMLPVCPLI…WASARFSWLS (74 aa). An N-linked (GlcNAc...) asparagine; by host glycan is attached at N309. Residues 338–358 form a helical membrane-spanning segment; sequence LLVPFVQWFVGLSPTVWLSVI. At 359-364 the chain is on the intravirion side; it reads WMMWYW. A helical membrane pass occupies residues 365 to 387; the sequence is GPSLYNTLSPFLPLLPIFFYLWV. At 388–389 the chain is on the virion surface side; it reads YI.

This sequence belongs to the orthohepadnavirus major surface antigen family. In its internal form (Li-HBsAg), interacts with the capsid protein and with the isoform S. Interacts with host chaperone CANX. In terms of assembly, associates with host chaperone CANX through its pre-S2 N glycan; this association may be essential for isoform M proper secretion. As to quaternary structure, interacts with isoform L. Interacts with the antigens of satellite virus HDV (HDVAgs); this interaction is required for encapsidation of HDV genomic RNA. Isoform M is N-terminally acetylated by host at a ratio of 90%, and N-glycosylated by host at the pre-S2 region. Post-translationally, myristoylated.

It localises to the virion membrane. The large envelope protein exists in two topological conformations, one which is termed 'external' or Le-HBsAg and the other 'internal' or Li-HBsAg. In its external conformation the protein attaches the virus to cell receptors and thereby initiating infection. This interaction determines the species specificity and liver tropism. This attachment induces virion internalization predominantly through caveolin-mediated endocytosis. The large envelope protein also assures fusion between virion membrane and endosomal membrane. In its internal conformation the protein plays a role in virion morphogenesis and mediates the contact with the nucleocapsid like a matrix protein. In terms of biological role, the middle envelope protein plays an important role in the budding of the virion. It is involved in the induction of budding in a nucleocapsid independent way. In this process the majority of envelope proteins bud to form subviral lipoprotein particles of 22 nm of diameter that do not contain a nucleocapsid. This is Large envelope protein from Homo sapiens (Human).